A 491-amino-acid chain; its full sequence is Carboxypeptidase SOL1 (491 aa).

The N-terminal stretch at 1–25 (MSKLRFFQSLLISTVICFFLPSINA) is a signal peptide. Over 26–452 (RGGHSDHIHP…LLTQFFTETN (427 aa)) the chain is Extracellular. An N-linked (GlcNAc...) asparagine glycan is attached at N39. One can recognise a Peptidase M14 domain in the interval 64 to 338 (GYMTNDDLEK…KSMLNLVASL (275 aa)). Zn(2+) is bound by residues H125 and E128. Substrate-binding positions include 125 to 128 (HGDE) and 186 to 187 (NR). H226 provides a ligand contact to Zn(2+). N268 carries an N-linked (GlcNAc...) asparagine glycan. Y286 is a substrate binding site. E308 acts as the Proton donor/acceptor in catalysis. The helical transmembrane segment at 453–470 (NGITLTLFVVVVFLCFLL) threads the bilayer. Residues 471-491 (QRRVRFNLWKQRQSSRRSITV) lie on the Cytoplasmic side of the membrane.

The protein belongs to the peptidase M14 family. Zn(2+) serves as cofactor. Expressed in roots, shoots, leaves, flowers and siliques.

The protein resides in the endosome membrane. In terms of biological role, possesses in vitro carboxypeptidase activity against the C-terminal arginine and lysine residues. Involved in the maturation of CLE19. Removes the C-terminal arginine residue of CLE19 proprotein. The cleavage of the C-terminal arginine residue is necessary for CLE19 activity in vivo. Is not involved in generating active CLV3. Is not involved in CLE19 or CLV3 perception. This chain is Carboxypeptidase SOL1, found in Arabidopsis thaliana (Mouse-ear cress).